The sequence spans 458 residues: Protochlorophyllide reductase, chloroplastic (458 aa).

It belongs to the short-chain dehydrogenases/reductases (SDR) family. POR subfamily.

The protein localises to the plastid. It is found in the chloroplast. It catalyses the reaction chlorophyllide a + NADP(+) = protochlorophyllide a + NADPH + H(+). It functions in the pathway porphyrin-containing compound metabolism; chlorophyll biosynthesis. Phototransformation of protochlorophyllide (Pchlide) to chlorophyllide (Chlide). This Marchantia paleacea (Liverwort) protein is Protochlorophyllide reductase, chloroplastic (PORA).